Consider the following 1153-residue polypeptide: ATP-dependent helicase/deoxyribonuclease subunit B (1153 aa).

Position 8–15 (8–15 (GRAGSGKS)) interacts with ATP. [4Fe-4S] cluster-binding residues include C786, C1104, C1107, and C1113.

The protein belongs to the helicase family. AddB/RexB type 1 subfamily. In terms of assembly, heterodimer of AddA and AddB. Mg(2+) is required as a cofactor. The cofactor is [4Fe-4S] cluster.

The heterodimer acts as both an ATP-dependent DNA helicase and an ATP-dependent, dual-direction single-stranded exonuclease. Recognizes the chi site generating a DNA molecule suitable for the initiation of homologous recombination. The AddB subunit has 5' -&gt; 3' nuclease activity but not helicase activity. The polypeptide is ATP-dependent helicase/deoxyribonuclease subunit B (Clostridium acetobutylicum (strain ATCC 824 / DSM 792 / JCM 1419 / IAM 19013 / LMG 5710 / NBRC 13948 / NRRL B-527 / VKM B-1787 / 2291 / W)).